A 300-amino-acid polypeptide reads, in one-letter code: MGGQLSIEARLKSIIPQLTFDSHKGACGKVAIIGGSVEYTGAPYFSGISALRVGCDLAHIFCHQDAAIAIKSYSPELIVHPFFKEDYDTNEVLKWLDTVQALVVGPGLGRDESVMEATLSILKQAITKNIIIILDADGLFLINNHLDLIRGKKNIILTPNVMEYRRLCDVLKVSHNTPCNKVALMLGGVTILQKGQVDEVSNGSYTVHVKHVGSPRRCGGQGDVLSGSLATFVAWSKLNQDFQDEDLICCSVAASALVKECSSFAFTEKHRGVIASDIIESIPSVFDQVFGQNKIQLIYE.

A YjeF C-terminal domain is found at 7–289 (IEARLKSIIP…ESIPSVFDQV (283 aa)). (6S)-NADPHX is bound by residues G107 and 160 to 166 (NVMEYRR). Residues 194 to 198 (KGQVD) and 213 to 222 (GSPRRCGGQG) contribute to the ATP site. Position 223 (D223) interacts with (6S)-NADPHX.

The protein belongs to the NnrD/CARKD family. Mg(2+) is required as a cofactor.

The catalysed reaction is (6S)-NADHX + ATP = ADP + phosphate + NADH + H(+). It catalyses the reaction (6S)-NADPHX + ATP = ADP + phosphate + NADPH + H(+). In terms of biological role, catalyzes the dehydration of the S-form of NAD(P)HX at the expense of ATP, which is converted to ADP. Together with NAD(P)HX epimerase, which catalyzes the epimerization of the S- and R-forms, the enzyme allows the repair of both epimers of NAD(P)HX, a damaged form of NAD(P)H that is a result of enzymatic or heat-dependent hydration. The protein is ATP-dependent (S)-NAD(P)H-hydrate dehydratase of Entamoeba histolytica (strain ATCC 30459 / HM-1:IMSS / ABRM).